Consider the following 349-residue polypeptide: Threonine-rich protein (349 aa).

Positions 1-19 are cleaved as a signal peptide; sequence MKGLTLACIAATVVAASHA. Asn257 carries an N-linked (GlcNAc...) asparagine glycan. The tract at residues 300–326 is disordered; that stretch reads QPDVSPMSVRKRRQAESAEEDDDLVGD. Residues 316–326 are compositionally biased toward acidic residues; the sequence is SAEEDDDLVGD. The stretch at 316–349 forms a coiled coil; that stretch reads SAEEDDDLVGDMEDLKELEQEIQEALEEVEKLDV.

Component of the acid-insoluble and acid-soluble organic matrix of calcified layers of the shell (at protein level).

Its subcellular location is the secreted. This chain is Threonine-rich protein, found in Lottia gigantea (Giant owl limpet).